The chain runs to 37 residues: Large ribosomal subunit protein bL36 (37 aa).

This sequence belongs to the bacterial ribosomal protein bL36 family.

The polypeptide is Large ribosomal subunit protein bL36 (Aquifex aeolicus (strain VF5)).